Reading from the N-terminus, the 262-residue chain is uncharacterized protein (262 aa).

Belongs to the BtpA family.

This is an uncharacterized protein from Pyrococcus furiosus (strain ATCC 43587 / DSM 3638 / JCM 8422 / Vc1).